We begin with the raw amino-acid sequence, 162 residues long: UPF0114 protein Psyr_4257 (162 aa).

4 helical membrane-spanning segments follow: residues 15 to 35, 53 to 73, 109 to 129, and 136 to 156; these read LLAP…LKFF, LILV…LVMV, VAAS…MDAT, and LMWY…MGYL.

Belongs to the UPF0114 family.

Its subcellular location is the cell membrane. The chain is UPF0114 protein Psyr_4257 from Pseudomonas syringae pv. syringae (strain B728a).